A 521-amino-acid polypeptide reads, in one-letter code: GMP synthase [glutamine-hydrolyzing] (521 aa).

A Glutamine amidotransferase type-1 domain is found at 8–203; the sequence is KILILDFGAQ…VVDVCGCQTL (196 aa). The Nucleophile role is filled by cysteine 85. Active-site residues include histidine 177 and glutamate 179. Residues 204 to 396 enclose the GMPS ATP-PPase domain; the sequence is WTAANIIDDQ…LGLPRTMVYR (193 aa). 231–237 is a binding site for ATP; the sequence is SGGVDSS.

As to quaternary structure, homodimer.

It catalyses the reaction XMP + L-glutamine + ATP + H2O = GMP + L-glutamate + AMP + diphosphate + 2 H(+). The protein operates within purine metabolism; GMP biosynthesis; GMP from XMP (L-Gln route): step 1/1. Catalyzes the synthesis of GMP from XMP. In Stenotrophomonas maltophilia (strain K279a), this protein is GMP synthase [glutamine-hydrolyzing].